The following is a 152-amino-acid chain: SsrA-binding protein (152 aa).

Belongs to the SmpB family.

It localises to the cytoplasm. Its function is as follows. Required for rescue of stalled ribosomes mediated by trans-translation. Binds to transfer-messenger RNA (tmRNA), required for stable association of tmRNA with ribosomes. tmRNA and SmpB together mimic tRNA shape, replacing the anticodon stem-loop with SmpB. tmRNA is encoded by the ssrA gene; the 2 termini fold to resemble tRNA(Ala) and it encodes a 'tag peptide', a short internal open reading frame. During trans-translation Ala-aminoacylated tmRNA acts like a tRNA, entering the A-site of stalled ribosomes, displacing the stalled mRNA. The ribosome then switches to translate the ORF on the tmRNA; the nascent peptide is terminated with the 'tag peptide' encoded by the tmRNA and targeted for degradation. The ribosome is freed to recommence translation, which seems to be the essential function of trans-translation. This is SsrA-binding protein from Rickettsia akari (strain Hartford).